A 624-amino-acid polypeptide reads, in one-letter code: Chaperone protein HtpG (624 aa).

An a; substrate-binding region spans residues 1-336; sequence MKGQETRGFQ…SNDLPLNVSR (336 aa). Residues 337 to 552 are b; sequence EILQDSTVTR…ADEMGTQMAK (216 aa). Residues 553 to 624 are c; sequence LFAAAGQAMP…IKRVNALLLG (72 aa).

Belongs to the heat shock protein 90 family. Homodimer.

Its subcellular location is the cytoplasm. Molecular chaperone. Has ATPase activity. The sequence is that of Chaperone protein HtpG from Enterobacter sp. (strain 638).